The following is a 108-amino-acid chain: Nitrite reductase (NADH) small subunit (108 aa).

In terms of assembly, associates with NirB.

It localises to the cytoplasm. It catalyses the reaction NH4(+) + 3 NAD(+) + 2 H2O = nitrite + 3 NADH + 5 H(+). In terms of biological role, required for activity of the reductase. The protein is Nitrite reductase (NADH) small subunit (nirD) of Salmonella typhi.